The chain runs to 342 residues: UHRF1-like protein (342 aa).

The tract at residues 41-149 (SEATTLATPS…SHPGSEEEDI (109 aa)) is disordered. Residues 42–59 (EATTLATPSNLKTAGNQR) show a composition bias toward polar residues. The span at 74–90 (NRSDSPRKRPTKDREDL) shows a compositional bias: basic and acidic residues. Polar residues predominate over residues 115-141 (TREQVTFNSDRDTPNTPSRQIKSTHSH). One can recognise a YDG domain in the interval 168 to 322 (GHIPGIGVGK…LMVCRYAFKR (155 aa)). Asp218 is a binding site for DNA. The tract at residues 236–257 (KGTKQNPKNLRTAPQTSHQSFD) is disordered. Residues 238–257 (TKQNPKNLRTAPQTSHQSFD) show a composition bias toward polar residues.

The protein resides in the nucleus. Functionally, involved in the maintenance of DNA methylation. Binds hemimethylated DNA. The polypeptide is UHRF1-like protein (Cryptococcus neoformans var. grubii serotype A (strain H99 / ATCC 208821 / CBS 10515 / FGSC 9487) (Filobasidiella neoformans var. grubii)).